Reading from the N-terminus, the 301-residue chain is Rhodopsin (301 aa).

The Extracellular segment spans residues 1 to 18; it reads LHMIHLHWYQYPPMNPMM. The helical transmembrane segment at 19-43 threads the bilayer; the sequence is YPLLLVFMLITGILCLAGNFVTIWV. The Cytoplasmic segment spans residues 44 to 55; sequence FMNTKSLRTPAN. A helical membrane pass occupies residues 56 to 78; it reads LLVVNLAMSDFLMMFTMFPPMMI. Over 79–92 the chain is Extracellular; sequence TCYYHTWTLGATFC. A disulfide bond links Cys-92 and Cys-169. Residues 93–115 form a helical membrane-spanning segment; sequence EVYAFLGNLCGCASIWTMVFITF. Positions 116–118 match the 'Ionic lock' involved in activated form stabilization motif; the sequence is DRY. Residues 116–134 are Cytoplasmic-facing; the sequence is DRYNVIVKGVAGEPLSTKK. Residues 135–155 form a helical membrane-spanning segment; the sequence is ASLWILTVWVLSFTWCVAPFF. The Extracellular portion of the chain corresponds to 156–182; the sequence is GWNRYVPEGNLTGCGTDYLSEDILSRS. Asn-165 carries N-linked (GlcNAc...) asparagine glycosylation. Residues 183–204 traverse the membrane as a helical segment; sequence YLYIYSTWVYFLPLAITIYCYV. At 205 to 245 the chain is on the cytoplasmic side; the sequence is FIIKAVAAHEKGMRDQAKKMGIKSLRNEEAQKTSAECRLAK. A helical transmembrane segment spans residues 246–267; it reads IAMTTVALWFIAWTPYLLINWV. Residues 268–278 are Extracellular-facing; the sequence is GMFARSYLSPV. A helical transmembrane segment spans residues 279–300; the sequence is YTIWGYVFAKANAVYNPIVYAI. Lys-288 bears the N6-(retinylidene)lysine mark.

This sequence belongs to the G-protein coupled receptor 1 family. Opsin subfamily. As to quaternary structure, homodimer. Interacts with GNAQ. Post-translationally, contains one covalently linked retinal chromophore.

It localises to the cell projection. Its subcellular location is the rhabdomere membrane. Photoreceptor required for image-forming vision at low light intensity. Can use both retinal and 3-dehydroretinal as visual pigment. Light-induced isomerization of 11-cis to all-trans retinal triggers a conformational change that activates signaling via G-proteins. Signaling via GNAQ probably mediates the activation of phospholipase C. The sequence is that of Rhodopsin (RHO) from Lacunicambarus ludovicianus (Painted devil crayfish).